We begin with the raw amino-acid sequence, 317 residues long: Acetyl-coenzyme A carboxylase carboxyl transferase subunit beta (317 aa).

One can recognise a CoA carboxyltransferase N-terminal domain in the interval 30-299; the sequence is LWTKCVACTA…VLPPLNVREK (270 aa). Zn(2+) contacts are provided by Cys34, Cys37, Cys53, and Cys56. The C4-type zinc finger occupies 34-56; the sequence is CVACTALTYTKDLQANQLVCTEC.

Belongs to the AccD/PCCB family. Acetyl-CoA carboxylase is a heterohexamer composed of biotin carboxyl carrier protein (AccB), biotin carboxylase (AccC) and two subunits each of ACCase subunit alpha (AccA) and ACCase subunit beta (AccD). The cofactor is Zn(2+).

It is found in the cytoplasm. It carries out the reaction N(6)-carboxybiotinyl-L-lysyl-[protein] + acetyl-CoA = N(6)-biotinyl-L-lysyl-[protein] + malonyl-CoA. The protein operates within lipid metabolism; malonyl-CoA biosynthesis; malonyl-CoA from acetyl-CoA: step 1/1. Its function is as follows. Component of the acetyl coenzyme A carboxylase (ACC) complex. Biotin carboxylase (BC) catalyzes the carboxylation of biotin on its carrier protein (BCCP) and then the CO(2) group is transferred by the transcarboxylase to acetyl-CoA to form malonyl-CoA. The polypeptide is Acetyl-coenzyme A carboxylase carboxyl transferase subunit beta (Crocosphaera subtropica (strain ATCC 51142 / BH68) (Cyanothece sp. (strain ATCC 51142))).